The sequence spans 347 residues: Ribosomal RNA small subunit methyltransferase C (347 aa).

It belongs to the methyltransferase superfamily. RsmC family. In terms of assembly, monomer.

It localises to the cytoplasm. The catalysed reaction is guanosine(1207) in 16S rRNA + S-adenosyl-L-methionine = N(2)-methylguanosine(1207) in 16S rRNA + S-adenosyl-L-homocysteine + H(+). Functionally, specifically methylates the guanine in position 1207 of 16S rRNA in the 30S particle. This is Ribosomal RNA small subunit methyltransferase C from Yersinia pseudotuberculosis serotype IB (strain PB1/+).